The sequence spans 458 residues: Argininosuccinate lyase (458 aa).

The protein belongs to the lyase 1 family. Argininosuccinate lyase subfamily.

The protein resides in the cytoplasm. The enzyme catalyses 2-(N(omega)-L-arginino)succinate = fumarate + L-arginine. It participates in amino-acid biosynthesis; L-arginine biosynthesis; L-arginine from L-ornithine and carbamoyl phosphate: step 3/3. In Trichlorobacter lovleyi (strain ATCC BAA-1151 / DSM 17278 / SZ) (Geobacter lovleyi), this protein is Argininosuccinate lyase.